Consider the following 198-residue polypeptide: Putative transposase InsO for insertion sequence element IS911B (198 aa).

The region spanning 105 to 198 is the Integrase catalytic domain; sequence AVTEPNQVWC…YCGDTGSGRV (94 aa).

In terms of biological role, involved in the transposition of the insertion sequence IS911B. This chain is Putative transposase InsO for insertion sequence element IS911B (insO2), found in Escherichia coli (strain K12).